The chain runs to 105 residues: Flowering-promoting factor 1-like protein 5 (105 aa).

Belongs to the FPF1 family.

This Oryza sativa subsp. japonica (Rice) protein is Flowering-promoting factor 1-like protein 5.